The sequence spans 166 residues: UPF0304 protein VFMJ11_1926 (166 aa).

It belongs to the UPF0304 family.

This is UPF0304 protein VFMJ11_1926 from Aliivibrio fischeri (strain MJ11) (Vibrio fischeri).